Reading from the N-terminus, the 132-residue chain is MIKEFKEFIMRGNVLDMAVGVILGAALKSIVDSLTKNLINPIISLFVGQVDLSGIAVTIPGTKAVFQIGNFLNDVINFLIIAIIVFLIVKGFNKLRDMGKKTEEEVAEEAAPTQEELYLKEIRDLLANKDHQ.

The next 3 helical transmembrane spans lie at 14 to 34 (VLDM…VDSL), 39 to 59 (INPI…AVTI), and 68 to 88 (IGNF…VFLI).

Belongs to the MscL family. As to quaternary structure, homopentamer.

It localises to the cell membrane. In terms of biological role, channel that opens in response to stretch forces in the membrane lipid bilayer. May participate in the regulation of osmotic pressure changes within the cell. This is Large-conductance mechanosensitive channel from Latilactobacillus sakei subsp. sakei (strain 23K) (Lactobacillus sakei subsp. sakei).